A 481-amino-acid chain; its full sequence is Pyruvate kinase (481 aa).

Arg33 serves as a coordination point for substrate. K(+) contacts are provided by Asn35, Ser37, Asp67, and Thr68. 35–38 (NFSH) serves as a coordination point for ATP. 2 residues coordinate ATP: Arg74 and Lys155. Mg(2+) is bound at residue Glu221. Substrate contacts are provided by Gly244, Asp245, and Thr277. Asp245 provides a ligand contact to Mg(2+).

The protein belongs to the pyruvate kinase family. In terms of assembly, homotetramer. It depends on Mg(2+) as a cofactor. K(+) is required as a cofactor.

The enzyme catalyses pyruvate + ATP = phosphoenolpyruvate + ADP + H(+). The protein operates within carbohydrate degradation; glycolysis; pyruvate from D-glyceraldehyde 3-phosphate: step 5/5. This chain is Pyruvate kinase (pyk), found in Chlamydia muridarum (strain MoPn / Nigg).